Here is a 35-residue protein sequence, read N- to C-terminus: ADSRKPDDRYDMSGNDALGDVKLATYEDNPWETFK.

Mg(2+) is bound at residue D20.

This sequence belongs to the arthropod phospholipase D family. Class II subfamily. Mg(2+) is required as a cofactor. In terms of processing, contains 2 disulfide bonds. As to expression, expressed by the venom gland.

It localises to the secreted. It carries out the reaction an N-(acyl)-sphingosylphosphocholine = an N-(acyl)-sphingosyl-1,3-cyclic phosphate + choline. The catalysed reaction is an N-(acyl)-sphingosylphosphoethanolamine = an N-(acyl)-sphingosyl-1,3-cyclic phosphate + ethanolamine. The enzyme catalyses a 1-acyl-sn-glycero-3-phosphocholine = a 1-acyl-sn-glycero-2,3-cyclic phosphate + choline. It catalyses the reaction a 1-acyl-sn-glycero-3-phosphoethanolamine = a 1-acyl-sn-glycero-2,3-cyclic phosphate + ethanolamine. In terms of biological role, dermonecrotic toxins cleave the phosphodiester linkage between the phosphate and headgroup of certain phospholipids (sphingolipid and lysolipid substrates), forming an alcohol (often choline) and a cyclic phosphate. This toxin acts on sphingomyelin (SM). It may also act on ceramide phosphoethanolamine (CPE), lysophosphatidylcholine (LPC) and lysophosphatidylethanolamine (LPE), but not on lysophosphatidylserine (LPS), and lysophosphatidylglycerol (LPG). It acts by transphosphatidylation, releasing exclusively cyclic phosphate products as second products. Induces dermonecrosis, hemolysis, increased vascular permeability, edema, inflammatory response, and platelet aggregation. The protein is Dermonecrotic toxin LgSicTox-beta-LOXN4 of Loxosceles gaucho (Spider).